Reading from the N-terminus, the 484-residue chain is Sperm motility kinase 1 (484 aa).

Residues 8–256 (YEMLETIGQG…VAEVMVHPWI (249 aa)) enclose the Protein kinase domain. Residues 14 to 22 (IGQGGCAKV) and K37 contribute to the ATP site. D127 acts as the Proton acceptor in catalysis. In terms of domain architecture, UBA spans 274–314 (KPDPAIVKPMGHIGFQAQDIEDSLRQRKFNETMASYCLLKK). Over residues 423–434 (IDESTEGHTSAS) the composition is skewed to polar residues. The segment at 423–447 (IDESTEGHTSASAEDKPVHSRGWPR) is disordered.

It belongs to the protein kinase superfamily. Tyr protein kinase family. Smok subfamily. Testis-specific. Expressed in the testis from 22 days postpartum (22 dpp).

It carries out the reaction L-seryl-[protein] + ATP = O-phospho-L-seryl-[protein] + ADP + H(+). The catalysed reaction is L-threonyl-[protein] + ATP = O-phospho-L-threonyl-[protein] + ADP + H(+). Its function is as follows. May play a role in sperm motility, especially in the regulation of flagellar function. The sequence is that of Sperm motility kinase 1 (Smok1) from Mus musculus (Mouse).